A 600-amino-acid polypeptide reads, in one-letter code: Elongation factor 4 (600 aa).

The 183-residue stretch at 4–186 folds into the tr-type G domain; sequence SKIRNFSIIA…AIVNKIPAPY (183 aa). GTP is bound by residues 16-21 and 133-136; these read DHGKST and NKVD.

This sequence belongs to the TRAFAC class translation factor GTPase superfamily. Classic translation factor GTPase family. LepA subfamily.

The protein resides in the cell membrane. The catalysed reaction is GTP + H2O = GDP + phosphate + H(+). Functionally, required for accurate and efficient protein synthesis under certain stress conditions. May act as a fidelity factor of the translation reaction, by catalyzing a one-codon backward translocation of tRNAs on improperly translocated ribosomes. Back-translocation proceeds from a post-translocation (POST) complex to a pre-translocation (PRE) complex, thus giving elongation factor G a second chance to translocate the tRNAs correctly. Binds to ribosomes in a GTP-dependent manner. The sequence is that of Elongation factor 4 from Mesoplasma florum (strain ATCC 33453 / NBRC 100688 / NCTC 11704 / L1) (Acholeplasma florum).